Here is a 150-residue protein sequence, read N- to C-terminus: uncharacterized protein (150 aa).

A compositionally biased stretch (low complexity) spans 1–19; it reads MNDDSSSSSSGDSSDGSSG. Disordered regions lie at residues 1-21 and 85-131; these read MNDDSSSSSSGDSSDGSSGTT and EPEA…AYPE. Pro residues predominate over residues 106-115; it reads RPPPTEPPTV.

This is an uncharacterized protein from Schizosaccharomyces pombe (strain 972 / ATCC 24843) (Fission yeast).